Reading from the N-terminus, the 1454-residue chain is Receptor-type tyrosine-protein phosphatase T (1454 aa).

The first 29 residues, methionine 1–alanine 29, serve as a signal peptide directing secretion. Over glutamine 30 to methionine 770 the chain is Extracellular. The MAM domain occupies glycine 34–lysine 195. N-linked (GlcNAc...) asparagine glycans are attached at residues asparagine 82, asparagine 102, asparagine 141, and asparagine 212. The Ig-like C2-type domain occupies proline 197–isoleucine 288. Cysteines 217 and 271 form a disulfide. 3 Fibronectin type-III domains span residues proline 295–alanine 388, glycine 393–aspartate 487, and valine 488–serine 594. N-linked (GlcNAc...) asparagine glycans are attached at residues asparagine 425, asparagine 514, asparagine 551, asparagine 605, asparagine 658, and asparagine 688. The Fibronectin type-III 4 domain occupies alanine 670 to threonine 767. The helical transmembrane segment at alanine 771–isoleucine 791 threads the bilayer. Topologically, residues lysine 792–phenylalanine 1454 are cytoplasmic. Residues glutamine 800 to serine 852 are disordered. Over residues leucine 824–asparagine 841 the composition is skewed to polar residues. Tyrosine-protein phosphatase domains follow at residues phenylalanine 902–alanine 1156 and isoleucine 1188–tyrosine 1450. Residues aspartate 1065, cysteine 1097–arginine 1103, and glutamine 1141 contribute to the substrate site. Cysteine 1097 acts as the Phosphocysteine intermediate in catalysis. At serine 1221 the chain carries Phosphoserine. Cysteine 1391 serves as the catalytic Phosphocysteine intermediate.

It belongs to the protein-tyrosine phosphatase family. Receptor class 2B subfamily. Expression is restricted to the CNS. Distributed throughout the brain and spinal cord.

It is found in the membrane. It catalyses the reaction O-phospho-L-tyrosyl-[protein] + H2O = L-tyrosyl-[protein] + phosphate. Functionally, may be involved in both signal transduction and cellular adhesion in the CNS. May have specific signaling roles in the tyrosine phosphorylation/dephosphorylation pathway in the anterior compartment of the adult cerebellar cortex. In Mus musculus (Mouse), this protein is Receptor-type tyrosine-protein phosphatase T (Ptprt).